The primary structure comprises 249 residues: Probable transcriptional regulatory protein CYB_1350 (249 aa).

Belongs to the TACO1 family.

Its subcellular location is the cytoplasm. In Synechococcus sp. (strain JA-2-3B'a(2-13)) (Cyanobacteria bacterium Yellowstone B-Prime), this protein is Probable transcriptional regulatory protein CYB_1350.